The sequence spans 298 residues: N-acetylmuramic acid 6-phosphate etherase (298 aa).

An SIS domain is found at 55–218; sequence IHAQVSGGGR…STGLMIKSGK (164 aa). Catalysis depends on Glu-83, which acts as the Proton donor. Glu-114 is a catalytic residue.

This sequence belongs to the GCKR-like family. MurNAc-6-P etherase subfamily. In terms of assembly, homodimer.

It catalyses the reaction N-acetyl-D-muramate 6-phosphate + H2O = N-acetyl-D-glucosamine 6-phosphate + (R)-lactate. The protein operates within amino-sugar metabolism; 1,6-anhydro-N-acetylmuramate degradation. It functions in the pathway amino-sugar metabolism; N-acetylmuramate degradation. Its pathway is cell wall biogenesis; peptidoglycan recycling. In terms of biological role, specifically catalyzes the cleavage of the D-lactyl ether substituent of MurNAc 6-phosphate, producing GlcNAc 6-phosphate and D-lactate. Together with AnmK, is also required for the utilization of anhydro-N-acetylmuramic acid (anhMurNAc) either imported from the medium or derived from its own cell wall murein, and thus plays a role in cell wall recycling. The protein is N-acetylmuramic acid 6-phosphate etherase of Shigella flexneri serotype 5b (strain 8401).